We begin with the raw amino-acid sequence, 337 residues long: Diacylglycerol O-acyltransferase 2-like protein 6 (337 aa).

The next 2 helical transmembrane spans lie at 22–42 and 102–122; these read IPVY…FLLF and YIIA…NFAT.

Belongs to the diacylglycerol acyltransferase family. As to expression, expressed in all tissues tested except pancreas.

The protein localises to the endoplasmic reticulum membrane. The enzyme catalyses 1,2-di-(9Z-octadecenoyl)-sn-glycerol + (9Z)-octadecenoyl-CoA = 1,2,3-tri-(9Z-octadecenoyl)-glycerol + CoA. It carries out the reaction 1-O-(9Z-octadecenyl)-glycerol + (9Z)-octadecenoyl-CoA = 1-O-(9Z-octadecyl)-3-(9Z-octadecenoyl)-glycerol + CoA. It catalyses the reaction 1-(9Z-octadecenoyl)-glycerol + (9Z)-octadecenoyl-CoA = 1,2-di-(9Z-octadecenoyl)-glycerol + CoA. In terms of biological role, diglyceride acyltransferase that uses fatty acyl-CoA as substrate. Particularly active with oleate as a substrate. Has no wax synthase activity to produce wax esters. Able to use 1-monoalkylglycerol (1-MAkG) as an acyl acceptor for the synthesis of monoalkyl-monoacylglycerol (MAMAG). The chain is Diacylglycerol O-acyltransferase 2-like protein 6 from Homo sapiens (Human).